Reading from the N-terminus, the 360-residue chain is G-protein coupled receptor 15 (360 aa).

Topologically, residues 1–33 are extracellular; the sequence is MDPEETSVYLDYYYATSPNPDIRETHSHVPYTS. A helical membrane pass occupies residues 34–54; sequence VFLPVFYTAVFLTGVLGNLVL. At 55-69 the chain is on the cytoplasmic side; that stretch reads MGALHFKPGSRRLID. The helical transmembrane segment at 70-90 threads the bilayer; sequence IFIINLAASDFIFLVTLPLWV. Residues 91–120 are Extracellular-facing; that stretch reads DKEASLGLWRTGSFLCKGSSYMISVNMHCS. The chain crosses the membrane as a helical span at residues 121–141; the sequence is VFLLTCMSVDRYLAIVCPVVS. The Cytoplasmic segment spans residues 142 to 149; it reads RKFRRTDC. Residues 150–170 form a helical membrane-spanning segment; the sequence is AYVVCASIWFISCLLGLPTLL. At 171–192 the chain is on the extracellular side; sequence SRELTLIDDKPYCAEKKATPLK. A helical transmembrane segment spans residues 193-213; sequence LIWSLVALIFTFFVPLLSIVT. Over 214-239 the chain is Cytoplasmic; it reads CYCCIARKLCAHYQQSGKHNKKLKKS. A helical membrane pass occupies residues 240–260; the sequence is IKIIFIVVAAFLVSWLPFNTF. Over 261-284 the chain is Extracellular; that stretch reads KLLAIVSGLQQERYFPSAMLQLGM. Residues 285 to 305 traverse the membrane as a helical segment; that stretch reads EVSGPLAFANSCVNPFIYYIF. Residues 306-360 lie on the Cytoplasmic side of the membrane; it reads DSYIRRAIVHCLCPCLKNYDFGSSTETSDSHLTKALSTFIHAEDFTRRRKRSVSL. Ser-359 carries the post-translational modification Phosphoserine.

Belongs to the G-protein coupled receptor 1 family. As to quaternary structure, interacts with adapter YWHAE; this interaction promotes ER-to-Golgi transport of GPR15. Phosphorylation is necessary for YWHAE binding and efficient surface expression. Post-translationally, O-glycosylated. Sialylated O-glycans in the N-terminal tail inhibits binding of GPR15LG. In terms of processing, sulfation is required for efficient binding of GPR15LG.

The protein resides in the cell membrane. In terms of biological role, g protein-coupled receptor that plays an important role in immune homeostasis. Acts via its natural ligand GPR15LG, a chemokine-like polypeptide strongly expressed in gastrointestinal tissues. GPR15-GPR15LG signaling axis regulates intestinal homeostasis and inflammation through the migration of immune cells. Controls thereby the specific homing of T-cells, particularly FOXP3+ regulatory T-cells (Tregs), to the large intestine lamina propria. Also required for skin localization of thymus-derived dendritic epidermal T-cells. Plays an important role in mediating cytoprotective function as well as angiogenesis of thrombomodulin. Mechanistically, preferentially signals through the Gi/o pathway to inhibit adenylate cyclase activity and activate a phosphatidylinositol-calcium second messenger system that regulates the release of Ca(2+) ions from intracellular stores. This is G-protein coupled receptor 15 (GPR15) from Macaca mulatta (Rhesus macaque).